We begin with the raw amino-acid sequence, 163 residues long: ATP synthase subunit b 1 (163 aa).

Residues 5–25 (FDATFFAFVGLVLFLALVVYL) form a helical membrane-spanning segment.

Belongs to the ATPase B chain family. As to quaternary structure, F-type ATPases have 2 components, F(1) - the catalytic core - and F(0) - the membrane proton channel. F(1) has five subunits: alpha(3), beta(3), gamma(1), delta(1), epsilon(1). F(0) has three main subunits: a(1), b(2) and c(10-14). The alpha and beta chains form an alternating ring which encloses part of the gamma chain. F(1) is attached to F(0) by a central stalk formed by the gamma and epsilon chains, while a peripheral stalk is formed by the delta and b chains.

It is found in the cell inner membrane. Functionally, f(1)F(0) ATP synthase produces ATP from ADP in the presence of a proton or sodium gradient. F-type ATPases consist of two structural domains, F(1) containing the extramembraneous catalytic core and F(0) containing the membrane proton channel, linked together by a central stalk and a peripheral stalk. During catalysis, ATP synthesis in the catalytic domain of F(1) is coupled via a rotary mechanism of the central stalk subunits to proton translocation. Its function is as follows. Component of the F(0) channel, it forms part of the peripheral stalk, linking F(1) to F(0). The polypeptide is ATP synthase subunit b 1 (Rhizobium leguminosarum bv. trifolii (strain WSM2304)).